The chain runs to 103 residues: Small ribosomal subunit protein uS14c (103 aa).

The protein belongs to the universal ribosomal protein uS14 family. As to quaternary structure, part of the 30S ribosomal subunit.

The protein resides in the plastid. Its subcellular location is the chloroplast. In terms of biological role, binds 16S rRNA, required for the assembly of 30S particles. This Oryza nivara (Indian wild rice) protein is Small ribosomal subunit protein uS14c.